A 163-amino-acid polypeptide reads, in one-letter code: Nucleotide-binding protein ROP_16630 (163 aa).

Belongs to the YajQ family.

Its function is as follows. Nucleotide-binding protein. The polypeptide is Nucleotide-binding protein ROP_16630 (Rhodococcus opacus (strain B4)).